The sequence spans 438 residues: Trigger factor (438 aa).

Residues G163 to R248 form the PPIase FKBP-type domain.

It belongs to the FKBP-type PPIase family. Tig subfamily.

The protein resides in the cytoplasm. The enzyme catalyses [protein]-peptidylproline (omega=180) = [protein]-peptidylproline (omega=0). Involved in protein export. Acts as a chaperone by maintaining the newly synthesized protein in an open conformation. Functions as a peptidyl-prolyl cis-trans isomerase. In Syntrophomonas wolfei subsp. wolfei (strain DSM 2245B / Goettingen), this protein is Trigger factor.